We begin with the raw amino-acid sequence, 52 residues long: UPF0181 protein CGSHiGG_01050 (52 aa).

It belongs to the UPF0181 family.

The polypeptide is UPF0181 protein CGSHiGG_01050 (Haemophilus influenzae (strain PittGG)).